Consider the following 81-residue polypeptide: ATP synthase subunit c (81 aa).

2 helical membrane passes run 6–26 (AAAS…GPGI) and 57–77 (LAFM…LLFA).

The protein belongs to the ATPase C chain family. F-type ATPases have 2 components, F(1) - the catalytic core - and F(0) - the membrane proton channel. F(1) has five subunits: alpha(3), beta(3), gamma(1), delta(1), epsilon(1). F(0) has four main subunits: a(1), b(1), b'(1) and c(10-14). The alpha and beta chains form an alternating ring which encloses part of the gamma chain. F(1) is attached to F(0) by a central stalk formed by the gamma and epsilon chains, while a peripheral stalk is formed by the delta, b and b' chains.

The protein localises to the cellular thylakoid membrane. Functionally, f(1)F(0) ATP synthase produces ATP from ADP in the presence of a proton or sodium gradient. F-type ATPases consist of two structural domains, F(1) containing the extramembraneous catalytic core and F(0) containing the membrane proton channel, linked together by a central stalk and a peripheral stalk. During catalysis, ATP synthesis in the catalytic domain of F(1) is coupled via a rotary mechanism of the central stalk subunits to proton translocation. Key component of the F(0) channel; it plays a direct role in translocation across the membrane. A homomeric c-ring of between 10-14 subunits forms the central stalk rotor element with the F(1) delta and epsilon subunits. In Picosynechococcus sp. (strain ATCC 27264 / PCC 7002 / PR-6) (Agmenellum quadruplicatum), this protein is ATP synthase subunit c.